Here is a 286-residue protein sequence, read N- to C-terminus: ATP synthase gamma chain (286 aa).

This sequence belongs to the ATPase gamma chain family. F-type ATPases have 2 components, CF(1) - the catalytic core - and CF(0) - the membrane proton channel. CF(1) has five subunits: alpha(3), beta(3), gamma(1), delta(1), epsilon(1). CF(0) has three main subunits: a, b and c.

It localises to the cell inner membrane. Its function is as follows. Produces ATP from ADP in the presence of a proton gradient across the membrane. The gamma chain is believed to be important in regulating ATPase activity and the flow of protons through the CF(0) complex. The sequence is that of ATP synthase gamma chain from Pseudomonas fluorescens (strain ATCC BAA-477 / NRRL B-23932 / Pf-5).